We begin with the raw amino-acid sequence, 782 residues long: Isoamylase 3, chloroplastic (782 aa).

A chloroplast-targeting transit peptide spans 1–68; that stretch reads MDSIGINRAP…EKVRRFDSVR (68 aa). The span at 68 to 81 shows a compositional bias: polar residues; sequence RSTTARAQNGNAGR. A disordered region spans residues 68–88; it reads RSTTARAQNGNAGRSMTEERG. D445 (nucleophile) is an active-site residue. E482 (proton donor) is an active-site residue.

This sequence belongs to the glycosyl hydrolase 13 family. As to expression, expressed in leaves. Expressed at low levels in developing endosperm.

The protein resides in the plastid. Its subcellular location is the chloroplast. The protein localises to the amyloplast. It carries out the reaction Hydrolysis of (1-&gt;6)-alpha-D-glucosidic branch linkages in glycogen, amylopectin and their beta-limit dextrins.. Starch-debranching enzyme that plays a role in the degradation of transitory starch during the night in leaf blades, facilitates the formation of spherical amyloplasts containing compound granules in the endosperm, and affects morphological characteristics of plastids. This Oryza sativa subsp. japonica (Rice) protein is Isoamylase 3, chloroplastic.